A 475-amino-acid chain; its full sequence is UDP-N-acetylmuramoylalanine--D-glutamate ligase (475 aa).

An ATP-binding site is contributed by 130–136; sequence GTNGKTT.

The protein belongs to the MurCDEF family.

The protein resides in the cytoplasm. The catalysed reaction is UDP-N-acetyl-alpha-D-muramoyl-L-alanine + D-glutamate + ATP = UDP-N-acetyl-alpha-D-muramoyl-L-alanyl-D-glutamate + ADP + phosphate + H(+). The protein operates within cell wall biogenesis; peptidoglycan biosynthesis. In terms of biological role, cell wall formation. Catalyzes the addition of glutamate to the nucleotide precursor UDP-N-acetylmuramoyl-L-alanine (UMA). In Corynebacterium diphtheriae (strain ATCC 700971 / NCTC 13129 / Biotype gravis), this protein is UDP-N-acetylmuramoylalanine--D-glutamate ligase.